We begin with the raw amino-acid sequence, 360 residues long: Histidinol-phosphate aminotransferase (360 aa).

The residue at position 222 (Lys-222) is an N6-(pyridoxal phosphate)lysine.

Belongs to the class-II pyridoxal-phosphate-dependent aminotransferase family. Histidinol-phosphate aminotransferase subfamily. As to quaternary structure, homodimer. Requires pyridoxal 5'-phosphate as cofactor.

The enzyme catalyses L-histidinol phosphate + 2-oxoglutarate = 3-(imidazol-4-yl)-2-oxopropyl phosphate + L-glutamate. The protein operates within amino-acid biosynthesis; L-histidine biosynthesis; L-histidine from 5-phospho-alpha-D-ribose 1-diphosphate: step 7/9. The sequence is that of Histidinol-phosphate aminotransferase from Listeria monocytogenes serotype 4b (strain CLIP80459).